The sequence spans 391 residues: 3-ketoacyl-CoA thiolase (391 aa).

Residue Cys-95 is the Acyl-thioester intermediate of the active site. Catalysis depends on proton acceptor residues His-347 and Cys-377.

Belongs to the thiolase-like superfamily. Thiolase family. In terms of assembly, heterotetramer of two alpha chains (FadB) and two beta chains (FadA).

It localises to the cytoplasm. The catalysed reaction is an acyl-CoA + acetyl-CoA = a 3-oxoacyl-CoA + CoA. It participates in lipid metabolism; fatty acid beta-oxidation. Functionally, catalyzes the final step of fatty acid oxidation in which acetyl-CoA is released and the CoA ester of a fatty acid two carbons shorter is formed. This is 3-ketoacyl-CoA thiolase from Pseudomonas putida (Arthrobacter siderocapsulatus).